The chain runs to 704 residues: Ion-translocating oxidoreductase complex subunit C (704 aa).

2 4Fe-4S ferredoxin-type domains span residues 368 to 397 (MGAP…QQLY) and 407 to 436 (KATA…VQYF). Residues Cys377, Cys380, Cys383, Cys387, Cys416, Cys419, Cys422, and Cys426 each coordinate [4Fe-4S] cluster. Residues 536-684 (RAKQAAHPMA…PADPRKAAVA (149 aa)) form a disordered region. Residues 556 to 565 (KAAVEAAIAR) show a composition bias toward low complexity.

This sequence belongs to the 4Fe4S bacterial-type ferredoxin family. RnfC subfamily. The complex is composed of six subunits: RsxA, RsxB, RsxC, RsxD, RsxE and RsxG. [4Fe-4S] cluster serves as cofactor.

The protein resides in the cell inner membrane. In terms of biological role, part of a membrane-bound complex that couples electron transfer with translocation of ions across the membrane. Required to maintain the reduced state of SoxR. This chain is Ion-translocating oxidoreductase complex subunit C, found in Salmonella choleraesuis (strain SC-B67).